The chain runs to 180 residues: Inner membrane-spanning protein YciB (180 aa).

Transmembrane regions (helical) follow at residues 10–30, 47–67, 74–94, 121–141, and 151–171; these read IIAFFVFYKLADIYVATGVLM, ITTRHWVILAVVMLFGAVTLL, IKMKVSVVYVAIALMLLGGLI, YAWIIFCLALAAVNLYIAEFW, and VFGILGISLVFTIGTGFYMYH.

It belongs to the YciB family.

It is found in the cell inner membrane. Plays a role in cell envelope biogenesis, maintenance of cell envelope integrity and membrane homeostasis. This is Inner membrane-spanning protein YciB from Idiomarina loihiensis (strain ATCC BAA-735 / DSM 15497 / L2-TR).